We begin with the raw amino-acid sequence, 726 residues long: Transcription factor 12 (726 aa).

Disordered regions lie at residues Ser27–Phe75, Leu89–Asp223, Tyr243–Asp267, Ser289–Pro309, Pro345–Ala367, Thr380–Ser409, Met501–Leu532, Val558–Met624, and Glu694–Leu726. A compositionally biased stretch (polar residues) spans Pro29–Ala47. Over residues Ser55–Gly74 the composition is skewed to low complexity. Polar residues-rich tracts occupy residues Pro145–Gly157, Gly249–Leu263, and Phe291–Pro309. Low complexity predominate over residues Thr348–Pro359. Composition is skewed to polar residues over residues Gly389–Ser409 and Gly510–Leu532. Over residues Glu559–Leu575 the composition is skewed to basic and acidic residues. The span at Ser592–Ser603 shows a compositional bias: low complexity. The segment covering Pro612–Met624 has biased composition (basic and acidic residues). Residues Glu621–Leu674 form the bHLH domain. Positions Gln676–Ser699 are class A specific domain. Residues Thr717–Leu726 are compositionally biased toward polar residues.

In terms of assembly, efficient DNA binding requires dimerization with another bHLH protein.

Its subcellular location is the nucleus. In terms of biological role, transcriptional regulator. Involved in the initiation of neuronal differentiation. Activates transcription by binding to the E box (5'-CANNTG-3'). May be involved in the functional network that regulates the development of the GnRH axis. The sequence is that of Transcription factor 12 (tcf12) from Danio rerio (Zebrafish).